A 370-amino-acid polypeptide reads, in one-letter code: Putative agmatine deiminase (370 aa).

Cys-361 functions as the Amidino-cysteine intermediate in the catalytic mechanism.

It belongs to the agmatine deiminase family.

The catalysed reaction is agmatine + H2O = N-carbamoylputrescine + NH4(+). In Shewanella sp. (strain MR-7), this protein is Putative agmatine deiminase.